Here is a 329-residue protein sequence, read N- to C-terminus: Beta-ketoacyl-[acyl-carrier-protein] synthase III (329 aa).

Catalysis depends on residues Cys123 and His256. The tract at residues 257 to 261 (QANIR) is ACP-binding. Residue Asn286 is part of the active site.

It belongs to the thiolase-like superfamily. FabH family. In terms of assembly, homodimer.

Its subcellular location is the cytoplasm. It catalyses the reaction malonyl-[ACP] + acetyl-CoA + H(+) = 3-oxobutanoyl-[ACP] + CO2 + CoA. The protein operates within lipid metabolism; fatty acid biosynthesis. Catalyzes the condensation reaction of fatty acid synthesis by the addition to an acyl acceptor of two carbons from malonyl-ACP. Catalyzes the first condensation reaction which initiates fatty acid synthesis and may therefore play a role in governing the total rate of fatty acid production. Possesses both acetoacetyl-ACP synthase and acetyl transacylase activities. Its substrate specificity determines the biosynthesis of branched-chain and/or straight-chain of fatty acids. This is Beta-ketoacyl-[acyl-carrier-protein] synthase III from Burkholderia vietnamiensis (strain G4 / LMG 22486) (Burkholderia cepacia (strain R1808)).